Here is a 562-residue protein sequence, read N- to C-terminus: Arginine--tRNA ligase (562 aa).

A 'HIGH' region motif is present at residues 121–131 (PNIAKPFSVGH).

It belongs to the class-I aminoacyl-tRNA synthetase family. In terms of assembly, monomer.

Its subcellular location is the cytoplasm. It carries out the reaction tRNA(Arg) + L-arginine + ATP = L-arginyl-tRNA(Arg) + AMP + diphosphate. This Streptococcus uberis (strain ATCC BAA-854 / 0140J) protein is Arginine--tRNA ligase.